A 473-amino-acid chain; its full sequence is Siroheme synthase 2 (473 aa).

A precorrin-2 dehydrogenase /sirohydrochlorin ferrochelatase region spans residues 1–204 (MDYFPIFCQL…NDHVQADQHV (204 aa)). NAD(+) contacts are provided by residues 22-23 (EI) and 43-44 (CE). A Phosphoserine modification is found at S128. A uroporphyrinogen-III C-methyltransferase region spans residues 216–473 (GEVVLVGAGP…KVTECVAHVG (258 aa)). P225 lines the S-adenosyl-L-methionine pocket. Residue D248 is the Proton acceptor of the active site. K270 (proton donor) is an active-site residue. S-adenosyl-L-methionine contacts are provided by residues 301–303 (GGD), I306, 331–332 (TA), M382, and G411.

The protein in the N-terminal section; belongs to the precorrin-2 dehydrogenase / sirohydrochlorin ferrochelatase family. This sequence in the C-terminal section; belongs to the precorrin methyltransferase family.

The catalysed reaction is uroporphyrinogen III + 2 S-adenosyl-L-methionine = precorrin-2 + 2 S-adenosyl-L-homocysteine + H(+). It catalyses the reaction precorrin-2 + NAD(+) = sirohydrochlorin + NADH + 2 H(+). It carries out the reaction siroheme + 2 H(+) = sirohydrochlorin + Fe(2+). Its pathway is cofactor biosynthesis; adenosylcobalamin biosynthesis; precorrin-2 from uroporphyrinogen III: step 1/1. It functions in the pathway cofactor biosynthesis; adenosylcobalamin biosynthesis; sirohydrochlorin from precorrin-2: step 1/1. It participates in porphyrin-containing compound metabolism; siroheme biosynthesis; precorrin-2 from uroporphyrinogen III: step 1/1. The protein operates within porphyrin-containing compound metabolism; siroheme biosynthesis; siroheme from sirohydrochlorin: step 1/1. Its pathway is porphyrin-containing compound metabolism; siroheme biosynthesis; sirohydrochlorin from precorrin-2: step 1/1. Multifunctional enzyme that catalyzes the SAM-dependent methylations of uroporphyrinogen III at position C-2 and C-7 to form precorrin-2 via precorrin-1. Then it catalyzes the NAD-dependent ring dehydrogenation of precorrin-2 to yield sirohydrochlorin. Finally, it catalyzes the ferrochelation of sirohydrochlorin to yield siroheme. In Yersinia pseudotuberculosis serotype O:1b (strain IP 31758), this protein is Siroheme synthase 2.